A 212-amino-acid chain; its full sequence is 3-isopropylmalate dehydratase small subunit (212 aa).

This sequence belongs to the LeuD family. LeuD type 1 subfamily. In terms of assembly, heterodimer of LeuC and LeuD.

It carries out the reaction (2R,3S)-3-isopropylmalate = (2S)-2-isopropylmalate. It functions in the pathway amino-acid biosynthesis; L-leucine biosynthesis; L-leucine from 3-methyl-2-oxobutanoate: step 2/4. Catalyzes the isomerization between 2-isopropylmalate and 3-isopropylmalate, via the formation of 2-isopropylmaleate. The protein is 3-isopropylmalate dehydratase small subunit of Pseudomonas aeruginosa (strain LESB58).